A 171-amino-acid polypeptide reads, in one-letter code: Ribosome maturation factor RimM (171 aa).

In terms of domain architecture, PRC barrel spans 97–170 (EGEYYYHEVI…QVTIHVMEGL (74 aa)).

It belongs to the RimM family. In terms of assembly, binds ribosomal protein uS19.

The protein localises to the cytoplasm. In terms of biological role, an accessory protein needed during the final step in the assembly of 30S ribosomal subunit, possibly for assembly of the head region. Essential for efficient processing of 16S rRNA. May be needed both before and after RbfA during the maturation of 16S rRNA. It has affinity for free ribosomal 30S subunits but not for 70S ribosomes. This chain is Ribosome maturation factor RimM, found in Bacillus cytotoxicus (strain DSM 22905 / CIP 110041 / 391-98 / NVH 391-98).